The chain runs to 414 residues: ORC1-type DNA replication protein 11 (414 aa).

ATP is bound by residues 60–64 (VGKTA), Y207, and R219.

The protein belongs to the CDC6/cdc18 family.

Involved in regulation of DNA replication. The sequence is that of ORC1-type DNA replication protein 11 (cdc6k) from Haloarcula marismortui (strain ATCC 43049 / DSM 3752 / JCM 8966 / VKM B-1809) (Halobacterium marismortui).